The following is an 84-amino-acid chain: Large ribosomal subunit protein bL27 (84 aa).

A disordered region spans residues 1 to 20; sequence MAHKKGGGSTKNGRDSNPKY.

Belongs to the bacterial ribosomal protein bL27 family.

This Chlorobaculum tepidum (strain ATCC 49652 / DSM 12025 / NBRC 103806 / TLS) (Chlorobium tepidum) protein is Large ribosomal subunit protein bL27.